Reading from the N-terminus, the 86-residue chain is DNA-directed RNA polymerase subunit omega (86 aa).

This sequence belongs to the RNA polymerase subunit omega family. As to quaternary structure, the RNAP catalytic core consists of 2 alpha, 1 beta, 1 beta' and 1 omega subunit. When a sigma factor is associated with the core the holoenzyme is formed, which can initiate transcription.

The catalysed reaction is RNA(n) + a ribonucleoside 5'-triphosphate = RNA(n+1) + diphosphate. Its function is as follows. Promotes RNA polymerase assembly. Latches the N- and C-terminal regions of the beta' subunit thereby facilitating its interaction with the beta and alpha subunits. In Psychrobacter sp. (strain PRwf-1), this protein is DNA-directed RNA polymerase subunit omega.